The sequence spans 613 residues: WD40 repeat-containing protein HOS15 (613 aa).

Residues 5 to 37 (TSVELNFLVFRYLQESGFTHAAFTLGYEAGINK) enclose the LisH domain. Disordered regions lie at residues 101–174 (KKRK…REKM) and 193–214 (EIER…KQLG). 8 WD repeats span residues 263–302 (GHTS…FKAV), 322–362 (EKSK…STLS), 363–402 (KHKG…WKQQ), 405–443 (FHSG…PAKT), 446–485 (GHQG…FVHD), 488–536 (EHTK…MLCS), 539–580 (GHRE…KTYT), and 582–613 (NGGI…DFRM).

It is found in the nucleus. In terms of biological role, acts as a repressor of cold stress-regulated gene expression. Interacts specifically with and promotes deacetylation of histone H4. Plays a role in gene regulation for plant acclimation and tolerance to cold stress. This chain is WD40 repeat-containing protein HOS15, found in Arabidopsis thaliana (Mouse-ear cress).